The following is a 474-amino-acid chain: 6-phospho-beta-galactosidase (474 aa).

D-galactose 6-phosphate-binding residues include glutamine 18, histidine 115, asparagine 159, glutamate 160, and asparagine 296. Glutamate 160 (proton donor) is an active-site residue. Glutamate 374 functions as the Nucleophile in the catalytic mechanism. 4 residues coordinate D-galactose 6-phosphate: serine 427, tryptophan 428, lysine 434, and tyrosine 436.

This sequence belongs to the glycosyl hydrolase 1 family.

It catalyses the reaction a 6-phospho-beta-D-galactoside + H2O = D-galactose 6-phosphate + an alcohol. It participates in carbohydrate metabolism; lactose degradation; D-galactose 6-phosphate and beta-D-glucose from lactose 6-phosphate: step 1/1. The sequence is that of 6-phospho-beta-galactosidase from Clostridium acetobutylicum (strain ATCC 824 / DSM 792 / JCM 1419 / IAM 19013 / LMG 5710 / NBRC 13948 / NRRL B-527 / VKM B-1787 / 2291 / W).